We begin with the raw amino-acid sequence, 259 residues long: Ribosomal RNA small subunit methyltransferase A (259 aa).

The S-adenosyl-L-methionine site is built by Asn13, Leu15, Gly39, Glu60, Asp84, and Asn101.

The protein belongs to the class I-like SAM-binding methyltransferase superfamily. rRNA adenine N(6)-methyltransferase family. RsmA subfamily.

Its subcellular location is the cytoplasm. It carries out the reaction adenosine(1518)/adenosine(1519) in 16S rRNA + 4 S-adenosyl-L-methionine = N(6)-dimethyladenosine(1518)/N(6)-dimethyladenosine(1519) in 16S rRNA + 4 S-adenosyl-L-homocysteine + 4 H(+). Specifically dimethylates two adjacent adenosines (A1518 and A1519) in the loop of a conserved hairpin near the 3'-end of 16S rRNA in the 30S particle. May play a critical role in biogenesis of 30S subunits. The polypeptide is Ribosomal RNA small subunit methyltransferase A (Mesomycoplasma hyopneumoniae (strain 232) (Mycoplasma hyopneumoniae)).